The primary structure comprises 415 residues: MTDQAEKKHSAFWGVMVIAGTVIGGGMFALPVDLAGAWFFWGAFILIIAWFSMLHSGLLLLEANLNYPVGSSFNTITKDLIGNTWNIISGITVAFVLYILTYAYISANGAIISETISMNLGYHANPRIVGICTAIFVASVLWISSLAASRITSLFLGLKIISFVIVFGSFFFLVDYSILRDATSSTAGTSYFPYIFMALPVCLASFGFHGNIPSLIICYGKRKDKLIKSVVFGSLLALVIYLFWLYCTMGNIPRESFKAIISSGGNVDSLVKSFLGTKQHGIIEFCLLVFSNLAVASSFFGVTLGLFDYLADLFKIDNSHGGRFKTVLLTFLPPALLYLIFPNGFIYGIGGAGLCATIWAVIIPAVLAIKARKKFPNQMFTVWGGNLIPAIVILFGITVILCWFGNVFNVLPKFG.

Residues 1–11 lie on the Cytoplasmic side of the membrane; the sequence is MTDQAEKKHSA. The helical transmembrane segment at 12–32 threads the bilayer; it reads FWGVMVIAGTVIGGGMFALPV. Residue Asp33 is a topological domain, periplasmic. Residues 34 to 54 traverse the membrane as a helical segment; that stretch reads LAGAWFFWGAFILIIAWFSML. Topologically, residues 55-86 are cytoplasmic; that stretch reads HSGLLLLEANLNYPVGSSFNTITKDLIGNTWN. A helical transmembrane segment spans residues 87–107; it reads IISGITVAFVLYILTYAYISA. The Periplasmic portion of the chain corresponds to 108 to 127; sequence NGAIISETISMNLGYHANPR. Residues 128 to 148 traverse the membrane as a helical segment; that stretch reads IVGICTAIFVASVLWISSLAA. Topologically, residues 149–153 are cytoplasmic; that stretch reads SRITS. Residues 154–174 traverse the membrane as a helical segment; it reads LFLGLKIISFVIVFGSFFFLV. The Periplasmic portion of the chain corresponds to 175–191; it reads DYSILRDATSSTAGTSY. The helical transmembrane segment at 192–212 threads the bilayer; that stretch reads FPYIFMALPVCLASFGFHGNI. The Cytoplasmic segment spans residues 213–229; it reads PSLIICYGKRKDKLIKS. The helical transmembrane segment at 230–250 threads the bilayer; the sequence is VVFGSLLALVIYLFWLYCTMG. Residues 251 to 286 lie on the Periplasmic side of the membrane; sequence NIPRESFKAIISSGGNVDSLVKSFLGTKQHGIIEFC. A helical transmembrane segment spans residues 287 to 307; it reads LLVFSNLAVASSFFGVTLGLF. Residues 308–326 lie on the Cytoplasmic side of the membrane; it reads DYLADLFKIDNSHGGRFKT. Residues 327–347 form a helical membrane-spanning segment; sequence VLLTFLPPALLYLIFPNGFIY. Position 348 (Gly348) is a topological domain, periplasmic. A helical transmembrane segment spans residues 349–369; sequence IGGAGLCATIWAVIIPAVLAI. At 370 to 387 the chain is on the cytoplasmic side; the sequence is KARKKFPNQMFTVWGGNL. Residues 388–408 form a helical membrane-spanning segment; it reads IPAIVILFGITVILCWFGNVF. Over 409-415 the chain is Periplasmic; it reads NVLPKFG.

Belongs to the amino acid/polyamine transporter 2 family. Mtr/TnaB/TyrP permease subfamily.

The protein resides in the cell inner membrane. Involved in tryptophan transport across the cytoplasmic membrane. Plays a role in transporting tryptophan which is to be used catabolically. The sequence is that of Low affinity tryptophan permease (tnaB) from Escherichia coli O157:H7.